A 238-amino-acid chain; its full sequence is Probable transcriptional regulatory protein SERP0322 (238 aa).

Belongs to the TACO1 family. YeeN subfamily.

It is found in the cytoplasm. This is Probable transcriptional regulatory protein SERP0322 from Staphylococcus epidermidis (strain ATCC 35984 / DSM 28319 / BCRC 17069 / CCUG 31568 / BM 3577 / RP62A).